Here is an 888-residue protein sequence, read N- to C-terminus: Leucine--tRNA ligase (888 aa).

The short motif at 43 to 53 is the 'HIGH' region element; that stretch reads PYPSGRIHMGH. The short motif at 644-648 is the 'KMSKS' region element; sequence KMSKS. ATP is bound at residue Lys647.

Belongs to the class-I aminoacyl-tRNA synthetase family.

The protein resides in the cytoplasm. It catalyses the reaction tRNA(Leu) + L-leucine + ATP = L-leucyl-tRNA(Leu) + AMP + diphosphate. In Rhodopseudomonas palustris (strain BisA53), this protein is Leucine--tRNA ligase.